Reading from the N-terminus, the 500-residue chain is Lysine--tRNA ligase (500 aa).

Glutamate 410 and glutamate 417 together coordinate Mg(2+).

This sequence belongs to the class-II aminoacyl-tRNA synthetase family. Homodimer. Mg(2+) serves as cofactor.

The protein resides in the cytoplasm. The enzyme catalyses tRNA(Lys) + L-lysine + ATP = L-lysyl-tRNA(Lys) + AMP + diphosphate. In Mycoplasma capricolum subsp. capricolum (strain California kid / ATCC 27343 / NCTC 10154), this protein is Lysine--tRNA ligase.